The sequence spans 301 residues: MTTSPSSSDYSSTEDSIYECKSNQSASVGYYPSENTFSYEDLVSREETASVDSLVHFLPPVQSTWRTESLRRLFRKRDQVEHDPEQFSKLSITLAWDIDVDSNHADSLANLDLNAHSQWMDKWPEDKTKLTPCKLYNLVQKLETFLGKEKGGQHDGCVLPESTQKEDVHLNSTTPPHTAQVSPKERDVCQDLSKQRSLENEDICQVLEDPPRLLKDEVVQEIRQASESSLETSSVSSPQPEGASRSHNIFCMNFRWVFQWLRTQIFSRWRRQRPSQATNTWHQKAVRNIHSLRSNRIQPQE.

Disordered regions lie at residues 167–186 and 225–244; these read DVHLNSTTPPHTAQVSPKER and ASESSLETSSVSSPQPEGAS. The segment covering 170–181 has biased composition (polar residues); that stretch reads LNSTTPPHTAQV. Residues 226–237 are compositionally biased toward low complexity; sequence SESSLETSSVSS.

This is an uncharacterized protein from Mus musculus (Mouse).